The primary structure comprises 248 residues: Triosephosphate isomerase (248 aa).

Residues N10 and K12 each coordinate substrate. Catalysis depends on H95, which acts as the Electrophile. E165 serves as the catalytic Proton acceptor.

Belongs to the triosephosphate isomerase family. Homodimer.

It catalyses the reaction D-glyceraldehyde 3-phosphate = dihydroxyacetone phosphate. It participates in carbohydrate biosynthesis; gluconeogenesis. It functions in the pathway carbohydrate degradation; glycolysis; D-glyceraldehyde 3-phosphate from glycerone phosphate: step 1/1. In Kluyveromyces lactis (strain ATCC 8585 / CBS 2359 / DSM 70799 / NBRC 1267 / NRRL Y-1140 / WM37) (Yeast), this protein is Triosephosphate isomerase (TPI1).